The primary structure comprises 172 residues: Shikimate kinase (172 aa).

14–19 is a binding site for ATP; the sequence is GAGKST. Residue S18 participates in Mg(2+) binding. Residues D36, R60, and G82 each coordinate substrate. R120 lines the ATP pocket. Residue R140 coordinates substrate. Residue Q157 participates in ATP binding.

This sequence belongs to the shikimate kinase family. Monomer. It depends on Mg(2+) as a cofactor.

The protein localises to the cytoplasm. It carries out the reaction shikimate + ATP = 3-phosphoshikimate + ADP + H(+). It participates in metabolic intermediate biosynthesis; chorismate biosynthesis; chorismate from D-erythrose 4-phosphate and phosphoenolpyruvate: step 5/7. In terms of biological role, catalyzes the specific phosphorylation of the 3-hydroxyl group of shikimic acid using ATP as a cosubstrate. This is Shikimate kinase from Colwellia psychrerythraea (strain 34H / ATCC BAA-681) (Vibrio psychroerythus).